We begin with the raw amino-acid sequence, 366 residues long: Left-right determination factor 1 (366 aa).

A signal peptide spans 1-21 (MQPLWLCWALWVLPLASPGAA). Positions 22-76 (LTGEQLLGSLLRQLQLKEVPTLDRADMEELVIPTHVRAQYVALLQRSHGDRSRGK) are cleaved as a propeptide — or 135. Asparagine 158 carries N-linked (GlcNAc...) asparagine glycosylation. 4 disulfides stabilise this stretch: cysteine 251–cysteine 264, cysteine 263–cysteine 316, cysteine 293–cysteine 351, and cysteine 297–cysteine 353.

Belongs to the TGF-beta family. Post-translationally, the processing of the protein may also occur at the second R-X-X-R site located at AA 132-135. Processing appears to be regulated in a cell-type specific manner.

Its subcellular location is the secreted. In terms of biological role, required for left-right axis determination as a regulator of LEFTY2 and NODAL. In Homo sapiens (Human), this protein is Left-right determination factor 1 (LEFTY1).